The sequence spans 225 residues: Peptidyl-tRNA hydrolase (225 aa).

A tRNA-binding site is contributed by tyrosine 14. The Proton acceptor role is filled by histidine 19. Residues phenylalanine 64, asparagine 66, and asparagine 112 each contribute to the tRNA site. The interval 182–225 (AVALRMQPPKPEKPKPAAKAPEAQAPEAAPDERSALQKLADRFR) is disordered. Residues 198–209 (AAKAPEAQAPEA) show a composition bias toward low complexity. Basic and acidic residues predominate over residues 211 to 225 (PDERSALQKLADRFR).

Belongs to the PTH family. Monomer.

The protein localises to the cytoplasm. The enzyme catalyses an N-acyl-L-alpha-aminoacyl-tRNA + H2O = an N-acyl-L-amino acid + a tRNA + H(+). In terms of biological role, hydrolyzes ribosome-free peptidyl-tRNAs (with 1 or more amino acids incorporated), which drop off the ribosome during protein synthesis, or as a result of ribosome stalling. Its function is as follows. Catalyzes the release of premature peptidyl moieties from peptidyl-tRNA molecules trapped in stalled 50S ribosomal subunits, and thus maintains levels of free tRNAs and 50S ribosomes. The polypeptide is Peptidyl-tRNA hydrolase (Cereibacter sphaeroides (strain ATCC 17029 / ATH 2.4.9) (Rhodobacter sphaeroides)).